A 709-amino-acid polypeptide reads, in one-letter code: Protein SOSEKI 3 (709 aa).

Residues S8–D101 are DIX-like oligomerization domain. Disordered stretches follow at residues L242–M266, R315–S344, G358–C393, P411–S439, and D506–P560. The segment covering E329 to E342 has biased composition (basic and acidic residues). The segment covering N417 to N436 has biased composition (basic and acidic residues). Polar residues predominate over residues V529–P544. The segment at I663–A692 adopts a C2HC/C3H-type zinc-finger fold. The Zn(2+) site is built by C667, C670, H682, and C686.

The protein belongs to the SOSEKI family. In terms of assembly, homodimer. Forms long polymer filaments with other SOKs proteins polymers crucial for polar localization and biological activity. Requires Zn(2+) as cofactor.

It is found in the cell membrane. SOSEKI proteins locally interpret global polarity cues and can influence cell division orientation to coordinate cell polarization relative to body axes. This is Protein SOSEKI 3 from Physcomitrium patens (Spreading-leaved earth moss).